The chain runs to 822 residues: Collagen alpha chain CG42342 (822 aa).

Disordered regions lie at residues 1-45 (MRKH…VEAP) and 66-99 (RLAP…KERP). Topologically, residues 1–104 (MRKHKAPPSG…SKERPRPTVR (104 aa)) are cytoplasmic. The span at 11-25 (SPRTMAQDNSQSEPS) shows a compositional bias: polar residues. A compositionally biased stretch (low complexity) spans 76-94 (INNSNNNSNISNNSSNSSS). Residues 105–125 (FISLLHVASYVLCLCAFSFAL) form a helical; Signal-anchor for type II membrane protein membrane-spanning segment. Topologically, residues 126–822 (YGNVRQTRLE…EYQDNLHNNE (697 aa)) are extracellular. Residues 131–162 (QTRLEQRMQRLQQLDARIVELELRLEQQQLLH) adopt a coiled-coil conformation. Disordered stretches follow at residues 169-188 (QVLA…NGSQ), 205-297 (VSHL…GHPG), and 345-822 (LKGE…HNNE). A coiled-coil region spans residues 194 to 222 (VRRELHRLRRDVSHLQLTRRQQRRQAAEA). 7 Collagen-like domains span residues 241–299 (QPGP…PGMD), 350–409 (GEPG…KGDR), 430–469 (GPPG…GKRG), 493–526 (RGPP…PGSL), 527–586 (GPRG…KGDK), 621–680 (GPPG…SGKA), and 681–740 (GIPG…KGEQ). A compositionally biased stretch (pro residues) spans 242-251 (PGPPGPPGPP). Residues 284–293 (PGDKGQKGDV) show a composition bias toward basic and acidic residues. Residues 360–402 (EAGQPGAPGERGPPGEIGAQGPQGEAGQPGVAGPPGVAGAPGT) are compositionally biased toward low complexity. Residues 403–412 (KGDKGDRGDR) are compositionally biased toward basic and acidic residues. Residues 431–443 (PPGPAGPPGPPGE) are compositionally biased toward pro residues. A compositionally biased stretch (basic and acidic residues) spans 504–517 (KDGRDGRDGSKGEP). Over residues 522 to 540 (EPGSLGPRGLDGLPGEPGI) the composition is skewed to low complexity. Pro residues predominate over residues 567–579 (LMGPPGLPGPPGY). Residues 583–602 (KGDKGDRGDSYRKMRRRQDD) show a composition bias toward basic and acidic residues. Over residues 619-628 (PPGPPGPMGP) the composition is skewed to pro residues. Over residues 638-655 (RGLDGRKGDPGEKGHKGD) the composition is skewed to basic and acidic residues. A compositionally biased stretch (low complexity) spans 658-668 (PMGLPGPMGMR). Residues 790 to 822 (TSDYEQEEEEDDEQAEDNENEYDEYQDNLHNNE) are a coiled coil. The segment covering 793-815 (YEQEEEEDDEQAEDNENEYDEYQ) has biased composition (acidic residues).

It is found in the cell membrane. This is Collagen alpha chain CG42342 from Drosophila melanogaster (Fruit fly).